The following is a 315-amino-acid chain: Small ribosomal subunit biogenesis GTPase RsgA (315 aa).

The CP-type G domain maps to 80-241; it reads LSKQTHIIAS…IIDTPGIKGF (162 aa). Residues 129–132 and 183–191 contribute to the GTP site; these read NKVD and GHSGTGKST. Zn(2+)-binding residues include Cys265, Cys270, His272, and Cys278.

This sequence belongs to the TRAFAC class YlqF/YawG GTPase family. RsgA subfamily. As to quaternary structure, monomer. Associates with 30S ribosomal subunit, binds 16S rRNA. The cofactor is Zn(2+).

Its subcellular location is the cytoplasm. In terms of biological role, one of several proteins that assist in the late maturation steps of the functional core of the 30S ribosomal subunit. Helps release RbfA from mature subunits. May play a role in the assembly of ribosomal proteins into the subunit. Circularly permuted GTPase that catalyzes slow GTP hydrolysis, GTPase activity is stimulated by the 30S ribosomal subunit. The polypeptide is Small ribosomal subunit biogenesis GTPase RsgA (Christiangramia forsetii (strain DSM 17595 / CGMCC 1.15422 / KT0803) (Gramella forsetii)).